Here is a 242-residue protein sequence, read N- to C-terminus: Ubiquinone biosynthesis O-methyltransferase (242 aa).

Positions 44, 64, 85, and 129 each coordinate S-adenosyl-L-methionine.

It belongs to the methyltransferase superfamily. UbiG/COQ3 family.

It carries out the reaction a 3-demethylubiquinol + S-adenosyl-L-methionine = a ubiquinol + S-adenosyl-L-homocysteine + H(+). The catalysed reaction is a 3-(all-trans-polyprenyl)benzene-1,2-diol + S-adenosyl-L-methionine = a 2-methoxy-6-(all-trans-polyprenyl)phenol + S-adenosyl-L-homocysteine + H(+). Its pathway is cofactor biosynthesis; ubiquinone biosynthesis. Its function is as follows. O-methyltransferase that catalyzes the 2 O-methylation steps in the ubiquinone biosynthetic pathway. The chain is Ubiquinone biosynthesis O-methyltransferase from Yersinia pseudotuberculosis serotype O:1b (strain IP 31758).